We begin with the raw amino-acid sequence, 68 residues long: ATP synthase F(0) complex subunit 8 (68 aa).

The helical transmembrane segment at 8–24 (VWPTMIAPMLLTLFLIT) threads the bilayer. Lysine 54 is subject to N6-acetyllysine; alternate. Lysine 54 is modified (N6-succinyllysine; alternate). Position 57 is an N6-acetyllysine (lysine 57).

The protein belongs to the ATPase protein 8 family. As to quaternary structure, component of the ATP synthase complex composed at least of ATP5F1A/subunit alpha, ATP5F1B/subunit beta, ATP5MC1/subunit c (homooctomer), MT-ATP6/subunit a, MT-ATP8/subunit 8, ATP5ME/subunit e, ATP5MF/subunit f, ATP5MG/subunit g, ATP5MK/subunit k, ATP5MJ/subunit j, ATP5F1C/subunit gamma, ATP5F1D/subunit delta, ATP5F1E/subunit epsilon, ATP5PF/subunit F6, ATP5PB/subunit b, ATP5PD/subunit d, ATP5PO/subunit OSCP. ATP synthase complex consists of a soluble F(1) head domain (subunits alpha(3) and beta(3)) - the catalytic core - and a membrane F(0) domain - the membrane proton channel (subunits c, a, 8, e, f, g, k and j). These two domains are linked by a central stalk (subunits gamma, delta, and epsilon) rotating inside the F1 region and a stationary peripheral stalk (subunits F6, b, d, and OSCP). Interacts with PRICKLE3.

The protein resides in the mitochondrion membrane. In terms of biological role, subunit 8, of the mitochondrial membrane ATP synthase complex (F(1)F(0) ATP synthase or Complex V) that produces ATP from ADP in the presence of a proton gradient across the membrane which is generated by electron transport complexes of the respiratory chain. ATP synthase complex consist of a soluble F(1) head domain - the catalytic core - and a membrane F(1) domain - the membrane proton channel. These two domains are linked by a central stalk rotating inside the F(1) region and a stationary peripheral stalk. During catalysis, ATP synthesis in the catalytic domain of F(1) is coupled via a rotary mechanism of the central stalk subunits to proton translocation. In vivo, can only synthesize ATP although its ATP hydrolase activity can be activated artificially in vitro. Part of the complex F(0) domain. This chain is ATP synthase F(0) complex subunit 8, found in Gorilla gorilla gorilla (Western lowland gorilla).